We begin with the raw amino-acid sequence, 270 residues long: LIM zinc-binding domain-containing Nebulette (270 aa).

Residues 3–63 (PQCARCGKVV…NAHYPKQSFT (61 aa)) enclose the LIM zinc-binding domain. Residues 61–95 (SFTTVADTPENLRLKQQSELQSQVKYKRDFEESKG) form a Nebulin 1 repeat. Position 96 is an omega-N-methylarginine (arginine 96). Residues 97–131 (GFSIVTDTPELQRLKRTQEQISNVKYHEDFEKTKG) form a Nebulin 2 repeat. Residue arginine 132 is modified to Omega-N-methylarginine. The stretch at 133 to 159 (GFTPVVDDPVTERVRKSTQVVSDAAYK) is one Nebulin 3 repeat. Threonine 135 carries the post-translational modification Phosphothreonine. Residues 210-270 (AHLRTYRAMY…LPANYIEFVN (61 aa)) enclose the SH3 domain. A Phosphoserine modification is found at serine 230.

It is found in the cytoplasm. In terms of biological role, binds to actin and plays an important role in the assembly of the Z-disk. Isoform 2 might play a role in the assembly of focal adhesion. This Mus musculus (Mouse) protein is LIM zinc-binding domain-containing Nebulette (Nebl).